We begin with the raw amino-acid sequence, 233 residues long: Ion-translocating oxidoreductase complex subunit E (233 aa).

The next 6 helical transmembrane spans lie at 18–38, 39–59, 69–89, 92–112, 128–148, and 182–202; these read ALVQ…ATNA, LGLG…VSAL, IPIY…LINA, FGLY…CIVI, ALDG…LGAL, and PFLL…LLAG.

It belongs to the NqrDE/RnfAE family. In terms of assembly, the complex is composed of six subunits: RnfA, RnfB, RnfC, RnfD, RnfE and RnfG.

It localises to the cell inner membrane. Its function is as follows. Part of a membrane-bound complex that couples electron transfer with translocation of ions across the membrane. This chain is Ion-translocating oxidoreductase complex subunit E, found in Yersinia pseudotuberculosis serotype O:1b (strain IP 31758).